The sequence spans 369 residues: MNAIESIEVALDTLPENRSYSIHIGQGLLSRMDLLLPHLPGKKAAIVTNTTIAPLYLEKLRSALAEHHVETFAITLPDGERYKHWETLNLIFDALLEHRCERRTPLIALGGGVIGDLTGFAAATYLRGVPFIQIPTTLLAQVDSSVGGKTGINHPLGKNMIGAFYQPQLVLTDSATLTTLPDRELRAGIAEIIKYGLIYDADFFDWLEQHMNSLLARDPAAVNYAIRRSCEIKAEIVSLDERESGLRALLNLGHTFGHAIENAMGYGAWLHGEAVAAGTLMAADLSRRLQRITSQEVDRIRYLFENTGLPVKGPRISPERYLESMQLDKKVKEGAIRFILLDSIGKASPGDTVPTPLLLETLSACVADA.

NAD(+) is bound by residues 78-83, 112-116, 136-137, Lys149, Lys158, and 176-179; these read DGERYK, GVIGD, TT, and TLTT. Zn(2+) contacts are provided by Glu191, His254, and His271.

The protein belongs to the sugar phosphate cyclases superfamily. Dehydroquinate synthase family. NAD(+) is required as a cofactor. Requires Co(2+) as cofactor. Zn(2+) serves as cofactor.

The protein localises to the cytoplasm. It catalyses the reaction 7-phospho-2-dehydro-3-deoxy-D-arabino-heptonate = 3-dehydroquinate + phosphate. It functions in the pathway metabolic intermediate biosynthesis; chorismate biosynthesis; chorismate from D-erythrose 4-phosphate and phosphoenolpyruvate: step 2/7. In terms of biological role, catalyzes the conversion of 3-deoxy-D-arabino-heptulosonate 7-phosphate (DAHP) to dehydroquinate (DHQ). This Nitrosomonas europaea (strain ATCC 19718 / CIP 103999 / KCTC 2705 / NBRC 14298) protein is 3-dehydroquinate synthase.